The chain runs to 96 residues: Protein Vpr (96 aa).

A homooligomerization region spans residues 1 to 42; the sequence is MEQAPEDQGPQREPYNEWTLELLEELKREAVRHFPRPWLHGL. A phosphoserine; by host mark is found at serine 79, serine 94, and serine 96.

Belongs to the HIV-1 VPR protein family. As to quaternary structure, homooligomer, may form homodimer. Interacts with p6-gag region of the Pr55 Gag precursor protein through a (Leu-X-X)4 motif near the C-terminus of the P6gag protein. Interacts with host UNG. May interact with host RAD23A/HHR23A. Interacts with host VPRBP/DCAF1, leading to hijack the CUL4A-RBX1-DDB1-DCAF1/VPRBP complex, mediating ubiquitination of host proteins such as TERT and ZGPAT and arrest of the cell cycle in G2 phase. In terms of processing, phosphorylated on several residues by host. These phosphorylations regulate VPR activity for the nuclear import of the HIV-1 pre-integration complex.

The protein localises to the virion. It is found in the host nucleus. The protein resides in the host extracellular space. In terms of biological role, during virus replication, may deplete host UNG protein, and incude G2-M cell cycle arrest. Acts by targeting specific host proteins for degradation by the 26S proteasome, through association with the cellular CUL4A-DDB1 E3 ligase complex by direct interaction with host VPRPB/DCAF-1. Cell cycle arrest reportedly occurs within hours of infection and is not blocked by antiviral agents, suggesting that it is initiated by the VPR carried into the virion. Additionally, VPR induces apoptosis in a cell cycle dependent manner suggesting that these two effects are mechanistically linked. Detected in the serum and cerebrospinal fluid of AIDS patient, VPR may also induce cell death to bystander cells. Functionally, during virus entry, plays a role in the transport of the viral pre-integration (PIC) complex to the host nucleus. This function is crucial for viral infection of non-dividing macrophages. May act directly at the nuclear pore complex, by binding nucleoporins phenylalanine-glycine (FG)-repeat regions. This Human immunodeficiency virus type 1 group M subtype C (isolate 92BR025) (HIV-1) protein is Protein Vpr.